A 38-amino-acid polypeptide reads, in one-letter code: Phi-Lf prophage-derived putative minor coat protein (38 aa).

The polypeptide is Phi-Lf prophage-derived putative minor coat protein (gIX-1) (Xanthomonas campestris pv. campestris (strain ATCC 33913 / DSM 3586 / NCPPB 528 / LMG 568 / P 25)).